The primary structure comprises 239 residues: 1-(5-phosphoribosyl)-5-[(5-phosphoribosylamino)methylideneamino] imidazole-4-carboxamide isomerase (239 aa).

Catalysis depends on aspartate 8, which acts as the Proton acceptor. Aspartate 129 functions as the Proton donor in the catalytic mechanism.

Belongs to the HisA/HisF family.

It is found in the cytoplasm. It carries out the reaction 1-(5-phospho-beta-D-ribosyl)-5-[(5-phospho-beta-D-ribosylamino)methylideneamino]imidazole-4-carboxamide = 5-[(5-phospho-1-deoxy-D-ribulos-1-ylimino)methylamino]-1-(5-phospho-beta-D-ribosyl)imidazole-4-carboxamide. Its pathway is amino-acid biosynthesis; L-histidine biosynthesis; L-histidine from 5-phospho-alpha-D-ribose 1-diphosphate: step 4/9. This chain is 1-(5-phosphoribosyl)-5-[(5-phosphoribosylamino)methylideneamino] imidazole-4-carboxamide isomerase, found in Bacillus cereus (strain G9842).